A 244-amino-acid chain; its full sequence is U4/U6.U5 tri-snRNP-associated protein 3-like protein C162.01c (244 aa).

2 stretches are compositionally biased toward basic and acidic residues: residues 1–11 (MSSSRSGEHRR) and 20–116 (ESSR…RRDG). 2 disordered regions span residues 1-192 (MSSS…EDEA) and 223-244 (KKTKYRQYMNRPGGFNRPLDNE). 2 positions are modified to phosphoserine: Ser-121 and Ser-140. The segment covering 126–182 (GLERKREHEKLQAPSPKEEEERPVDQGDKMDGVKEDKDGSLEVGKSHDAMTRTKSAE) has biased composition (basic and acidic residues). Residues 183 to 192 (EEIVEQEDEA) are compositionally biased toward acidic residues.

The protein belongs to the SNUT3 family. Part of a tri-snRNP complex.

The protein localises to the nucleus. In terms of biological role, may play a role in mRNA splicing. The polypeptide is U4/U6.U5 tri-snRNP-associated protein 3-like protein C162.01c (Schizosaccharomyces pombe (strain 972 / ATCC 24843) (Fission yeast)).